Here is a 452-residue protein sequence, read N- to C-terminus: tRNA(Ile)-lysidine synthase (452 aa).

Ser27–Ser32 serves as a coordination point for ATP.

This sequence belongs to the tRNA(Ile)-lysidine synthase family.

It localises to the cytoplasm. It catalyses the reaction cytidine(34) in tRNA(Ile2) + L-lysine + ATP = lysidine(34) in tRNA(Ile2) + AMP + diphosphate + H(+). Ligates lysine onto the cytidine present at position 34 of the AUA codon-specific tRNA(Ile) that contains the anticodon CAU, in an ATP-dependent manner. Cytidine is converted to lysidine, thus changing the amino acid specificity of the tRNA from methionine to isoleucine. The sequence is that of tRNA(Ile)-lysidine synthase from Persephonella marina (strain DSM 14350 / EX-H1).